The following is a 195-amino-acid chain: Fe/S biogenesis protein NfuA (195 aa).

Cys152 and Cys155 together coordinate [4Fe-4S] cluster.

The protein belongs to the NfuA family. As to quaternary structure, homodimer. [4Fe-4S] cluster serves as cofactor.

In terms of biological role, involved in iron-sulfur cluster biogenesis. Binds a 4Fe-4S cluster, can transfer this cluster to apoproteins, and thereby intervenes in the maturation of Fe/S proteins. Could also act as a scaffold/chaperone for damaged Fe/S proteins. This chain is Fe/S biogenesis protein NfuA, found in Vibrio cholerae serotype O1 (strain ATCC 39315 / El Tor Inaba N16961).